Consider the following 91-residue polypeptide: Acylphosphatase (91 aa).

An Acylphosphatase-like domain is found at 3–91 (TVTMKVTGLV…EKFTRFSVVY (89 aa)). Active-site residues include R18 and N36.

The protein belongs to the acylphosphatase family.

The catalysed reaction is an acyl phosphate + H2O = a carboxylate + phosphate + H(+). The chain is Acylphosphatase (acyP) from Lactobacillus gasseri (strain ATCC 33323 / DSM 20243 / BCRC 14619 / CIP 102991 / JCM 1131 / KCTC 3163 / NCIMB 11718 / NCTC 13722 / AM63).